The primary structure comprises 147 residues: Large ribosomal subunit protein uL11 (147 aa).

The protein belongs to the universal ribosomal protein uL11 family. As to quaternary structure, part of the ribosomal stalk of the 50S ribosomal subunit. Interacts with L10 and the large rRNA to form the base of the stalk. L10 forms an elongated spine to which L12 dimers bind in a sequential fashion forming a multimeric L10(L12)X complex. Post-translationally, one or more lysine residues are methylated.

Its function is as follows. Forms part of the ribosomal stalk which helps the ribosome interact with GTP-bound translation factors. The polypeptide is Large ribosomal subunit protein uL11 (Cytophaga hutchinsonii (strain ATCC 33406 / DSM 1761 / CIP 103989 / NBRC 15051 / NCIMB 9469 / D465)).